The sequence spans 564 residues: MRSDKIKKGVEQAPARSLLHATGQIKSPGDMDKPFIAICNSYIDIVPGHVHLRELADVAKEAIREAGGIPFEFNTIGVDDGIAMGHIGMRYSLPSREVIADAAETVINAHWFDGVFYIPNCDKITPGMLLASVRTNVPAIFCSGGPMKAGLSAHGKALTLSSVFEAVGAFKDGSMSQEDFLDMEANACPTCGSCAGMFTANSMNCLMEILGMAVPGNGTTLAVSDARRDLIRESAFHLMDLVKKDIRPRDIITKDAIDDAFALDMAMGGSTNTVLHTLALANEAGIEDYDLERINDIAKRVPYLSKIAPSSSYSMHDVHEAGGVSAIVKELVDLGGAIHPDRITVTGKTIRENVADAKINNTDVIHPKENPYSPVGGLSMLFGNIAPKGAAIKVGGVDPSVQVFKGEAICFSSHDEAVEAIDNHTVREGHVVVIRYEGPKGGPGMPEMLAPTSSIVGRGLGKDVALITDGRFSGATRGIAVGHISPEAAAGGPIALVHDGDIITIDLPNRTLNVDVSDEVLEERRKELPKFKAKVKTGYLARYTALVTSAHTGGILQIPEDLID.

Asp-80 provides a ligand contact to Mg(2+). Position 121 (Cys-121) interacts with [2Fe-2S] cluster. Mg(2+) is bound by residues Asp-122 and Lys-123. An N6-carboxylysine modification is found at Lys-123. Cys-194 lines the [2Fe-2S] cluster pocket. Glu-447 is a Mg(2+) binding site. The active-site Proton acceptor is the Ser-473.

This sequence belongs to the IlvD/Edd family. Homodimer. The cofactor is [2Fe-2S] cluster. Mg(2+) is required as a cofactor.

It catalyses the reaction (2R)-2,3-dihydroxy-3-methylbutanoate = 3-methyl-2-oxobutanoate + H2O. It carries out the reaction (2R,3R)-2,3-dihydroxy-3-methylpentanoate = (S)-3-methyl-2-oxopentanoate + H2O. It functions in the pathway amino-acid biosynthesis; L-isoleucine biosynthesis; L-isoleucine from 2-oxobutanoate: step 3/4. Its pathway is amino-acid biosynthesis; L-valine biosynthesis; L-valine from pyruvate: step 3/4. In terms of biological role, functions in the biosynthesis of branched-chain amino acids. Catalyzes the dehydration of (2R,3R)-2,3-dihydroxy-3-methylpentanoate (2,3-dihydroxy-3-methylvalerate) into 2-oxo-3-methylpentanoate (2-oxo-3-methylvalerate) and of (2R)-2,3-dihydroxy-3-methylbutanoate (2,3-dihydroxyisovalerate) into 2-oxo-3-methylbutanoate (2-oxoisovalerate), the penultimate precursor to L-isoleucine and L-valine, respectively. The sequence is that of Dihydroxy-acid dehydratase from Listeria monocytogenes serotype 4b (strain CLIP80459).